Reading from the N-terminus, the 439-residue chain is Xylose isomerase (439 aa).

Catalysis depends on residues H101 and D104. Residues E232, E268, H271, D296, D307, D309, and D339 each contribute to the Mg(2+) site.

This sequence belongs to the xylose isomerase family. In terms of assembly, homotetramer. The cofactor is Mg(2+).

It localises to the cytoplasm. The catalysed reaction is alpha-D-xylose = alpha-D-xylulofuranose. This Yersinia pestis bv. Antiqua (strain Angola) protein is Xylose isomerase.